Consider the following 1159-residue polypeptide: Phosphatidylinositol 3-kinase age-1 (1159 aa).

A compositionally biased stretch (polar residues) spans 1 to 25 (MSMGRSSSTTFRNRTASHGSRSLGS). The disordered stretch occupies residues 1–28 (MSMGRSSSTTFRNRTASHGSRSLGSAET). In terms of domain architecture, PI3K-ABD spans 79-179 (SEGVADMIVL…FPMLFLFEPD (101 aa)). The PI3K-RBD domain occupies 272–363 (RKSEANEVWE…YRCPGFVVRR (92 aa)). Residues 430–588 (LDSNLMIRPV…VKMPNEAQYK (159 aa)) enclose the C2 PI3K-type domain. The region spanning 607–793 (DYEACIGDPG…SLLMEAYLRG (187 aa)) is the PIK helical domain. The PI3K/PI4K catalytic domain occupies 858–1159 (VIEKAIVLGS…NWLFHAMKHY (302 aa)). The interval 864–870 (VLGSAKQ) is G-loop. The catalytic loop stretch occupies residues 1028-1036 (GIKDRHSDN). Residues 1047 to 1073 (HIDFGHILGHGKTKLGIQRDRQPFILT) are activation loop.

It belongs to the PI3/PI4-kinase family.

It catalyses the reaction a 1,2-diacyl-sn-glycero-3-phospho-(1D-myo-inositol) + ATP = a 1,2-diacyl-sn-glycero-3-phospho-(1D-myo-inositol-3-phosphate) + ADP + H(+). In terms of biological role, phosphatidylinositol 3-kinase homolog that regulates longevity and diapause. Promotes cell survival during embryonic development by recruiting akt-1/2 to the plasma membrane through the production of PtdIns(3,4,5)P3. Could function in the development or neuroendocrine signaling of the dauer pathway. Mediates susceptibility to enteropathogenic E.coli infection. May negatively regulate AYI interneuron neurite outgrowth. Plays a role in aversive olfactory learning when an odor is associated with food deprivation. Regulates this process by promoting the nuclear relocalization of egl-4 in AWC olfactory neurons after odor conditioning. The polypeptide is Phosphatidylinositol 3-kinase age-1 (age-1) (Caenorhabditis briggsae).